A 331-amino-acid chain; its full sequence is Pantothenate kinase (331 aa).

109 to 116 (GSVAVGKS) provides a ligand contact to ATP.

Belongs to the prokaryotic pantothenate kinase family.

It is found in the cytoplasm. The catalysed reaction is (R)-pantothenate + ATP = (R)-4'-phosphopantothenate + ADP + H(+). The protein operates within cofactor biosynthesis; coenzyme A biosynthesis; CoA from (R)-pantothenate: step 1/5. The sequence is that of Pantothenate kinase from Sinorhizobium medicae (strain WSM419) (Ensifer medicae).